The primary structure comprises 338 residues: Anthranilate phosphoribosyltransferase (338 aa).

5-phospho-alpha-D-ribose 1-diphosphate-binding positions include glycine 81, 84 to 85 (GD), serine 89, 91 to 94 (NVST), 109 to 117 (KHGNRALSS), and alanine 121. Glycine 81 is an anthranilate binding site. Serine 93 contributes to the Mg(2+) binding site. Position 112 (asparagine 112) interacts with anthranilate. Arginine 167 serves as a coordination point for anthranilate. The Mg(2+) site is built by aspartate 226 and glutamate 227.

It belongs to the anthranilate phosphoribosyltransferase family. Homodimer. It depends on Mg(2+) as a cofactor.

The catalysed reaction is N-(5-phospho-beta-D-ribosyl)anthranilate + diphosphate = 5-phospho-alpha-D-ribose 1-diphosphate + anthranilate. It functions in the pathway amino-acid biosynthesis; L-tryptophan biosynthesis; L-tryptophan from chorismate: step 2/5. In terms of biological role, catalyzes the transfer of the phosphoribosyl group of 5-phosphorylribose-1-pyrophosphate (PRPP) to anthranilate to yield N-(5'-phosphoribosyl)-anthranilate (PRA). This is Anthranilate phosphoribosyltransferase from Rhodopseudomonas palustris (strain HaA2).